The primary structure comprises 84 residues: Large ribosomal subunit protein bL31B (84 aa).

It belongs to the bacterial ribosomal protein bL31 family. Type B subfamily. In terms of assembly, part of the 50S ribosomal subunit.

The sequence is that of Large ribosomal subunit protein bL31B from Phocaeicola vulgatus (strain ATCC 8482 / DSM 1447 / JCM 5826 / CCUG 4940 / NBRC 14291 / NCTC 11154) (Bacteroides vulgatus).